A 295-amino-acid polypeptide reads, in one-letter code: Bifunctional protein FolD (295 aa).

NADP(+) is bound by residues 164–166, S193, and I234; that span reads GRS.

It belongs to the tetrahydrofolate dehydrogenase/cyclohydrolase family. As to quaternary structure, homodimer.

The enzyme catalyses (6R)-5,10-methylene-5,6,7,8-tetrahydrofolate + NADP(+) = (6R)-5,10-methenyltetrahydrofolate + NADPH. It catalyses the reaction (6R)-5,10-methenyltetrahydrofolate + H2O = (6R)-10-formyltetrahydrofolate + H(+). It participates in one-carbon metabolism; tetrahydrofolate interconversion. Functionally, catalyzes the oxidation of 5,10-methylenetetrahydrofolate to 5,10-methenyltetrahydrofolate and then the hydrolysis of 5,10-methenyltetrahydrofolate to 10-formyltetrahydrofolate. This is Bifunctional protein FolD from Flavobacterium johnsoniae (strain ATCC 17061 / DSM 2064 / JCM 8514 / BCRC 14874 / CCUG 350202 / NBRC 14942 / NCIMB 11054 / UW101) (Cytophaga johnsonae).